Here is a 437-residue protein sequence, read N- to C-terminus: GTPase Obg (437 aa).

The region spanning 2-160 (SMFLDTAKIS…RELQLELKIL (159 aa)) is the Obg domain. The 178-residue stretch at 161–338 (ADVGLVGFPS…LMDATAELLA (178 aa)) folds into the OBG-type G domain. GTP is bound by residues 167-174 (GFPSVGKS), 192-196 (FTTIV), 214-217 (DLPG), 284-287 (NKMD), and 319-321 (SSL). Residues serine 174 and threonine 194 each coordinate Mg(2+). The region spanning 359 to 437 (GFNEDERPFE…IGNFEFEFVD (79 aa)) is the OCT domain.

Belongs to the TRAFAC class OBG-HflX-like GTPase superfamily. OBG GTPase family. As to quaternary structure, monomer. The cofactor is Mg(2+).

Its subcellular location is the cytoplasm. In terms of biological role, an essential GTPase which binds GTP, GDP and possibly (p)ppGpp with moderate affinity, with high nucleotide exchange rates and a fairly low GTP hydrolysis rate. Plays a role in control of the cell cycle, stress response, ribosome biogenesis and in those bacteria that undergo differentiation, in morphogenesis control. In Streptococcus agalactiae serotype Ia (strain ATCC 27591 / A909 / CDC SS700), this protein is GTPase Obg.